The chain runs to 316 residues: DNA-directed RNA polymerase subunit alpha (316 aa).

Residues 1 to 233 (MCMSQFPIEF…HWFNPLQTLE (233 aa)) form an alpha N-terminal domain (alpha-NTD) region. An alpha C-terminal domain (alpha-CTD) region spans residues 245–316 (MAQLSNMLIE…LHCQLKKYVD (72 aa)).

The protein belongs to the RNA polymerase alpha chain family. As to quaternary structure, in plastids the minimal PEP RNA polymerase catalytic core is composed of four subunits: alpha, beta, beta', and beta''. When a (nuclear-encoded) sigma factor is associated with the core the holoenzyme is formed, which can initiate transcription.

The protein localises to the plastid. Its subcellular location is the chloroplast. The enzyme catalyses RNA(n) + a ribonucleoside 5'-triphosphate = RNA(n+1) + diphosphate. DNA-dependent RNA polymerase catalyzes the transcription of DNA into RNA using the four ribonucleoside triphosphates as substrates. This Cyanidioschyzon merolae (strain NIES-3377 / 10D) (Unicellular red alga) protein is DNA-directed RNA polymerase subunit alpha.